The chain runs to 433 residues: 3-phosphoshikimate 1-carboxyvinyltransferase (433 aa).

Positions 23, 24, and 28 each coordinate 3-phosphoshikimate. Lysine 23 serves as a coordination point for phosphoenolpyruvate. Phosphoenolpyruvate-binding residues include glycine 95 and arginine 123. Residues serine 170, serine 171, glutamine 172, serine 198, aspartate 317, and lysine 344 each contribute to the 3-phosphoshikimate site. Glutamine 172 is a phosphoenolpyruvate binding site. Aspartate 317 functions as the Proton acceptor in the catalytic mechanism. Positions 348, 391, and 416 each coordinate phosphoenolpyruvate.

Belongs to the EPSP synthase family. In terms of assembly, monomer.

It localises to the cytoplasm. The catalysed reaction is 3-phosphoshikimate + phosphoenolpyruvate = 5-O-(1-carboxyvinyl)-3-phosphoshikimate + phosphate. The protein operates within metabolic intermediate biosynthesis; chorismate biosynthesis; chorismate from D-erythrose 4-phosphate and phosphoenolpyruvate: step 6/7. Catalyzes the transfer of the enolpyruvyl moiety of phosphoenolpyruvate (PEP) to the 5-hydroxyl of shikimate-3-phosphate (S3P) to produce enolpyruvyl shikimate-3-phosphate and inorganic phosphate. The polypeptide is 3-phosphoshikimate 1-carboxyvinyltransferase (Neisseria meningitidis serogroup B (strain ATCC BAA-335 / MC58)).